The primary structure comprises 122 residues: S-adenosylmethionine decarboxylase proenzyme (122 aa).

Ser-63 serves as the catalytic Schiff-base intermediate with substrate; via pyruvic acid. Position 63 is a pyruvic acid (Ser); by autocatalysis (Ser-63). His-68 acts as the Proton acceptor; for processing activity in catalysis. Cys-83 serves as the catalytic Proton donor; for catalytic activity.

This sequence belongs to the prokaryotic AdoMetDC family. Type 1 subfamily. Heterotetramer of two alpha and two beta chains arranged as a dimer of alpha/beta heterodimers. It depends on pyruvate as a cofactor. In terms of processing, is synthesized initially as an inactive proenzyme. Formation of the active enzyme involves a self-maturation process in which the active site pyruvoyl group is generated from an internal serine residue via an autocatalytic post-translational modification. Two non-identical subunits are generated from the proenzyme in this reaction, and the pyruvate is formed at the N-terminus of the alpha chain, which is derived from the carboxyl end of the proenzyme. The post-translation cleavage follows an unusual pathway, termed non-hydrolytic serinolysis, in which the side chain hydroxyl group of the serine supplies its oxygen atom to form the C-terminus of the beta chain, while the remainder of the serine residue undergoes an oxidative deamination to produce ammonia and the pyruvoyl group blocking the N-terminus of the alpha chain.

The catalysed reaction is S-adenosyl-L-methionine + H(+) = S-adenosyl 3-(methylsulfanyl)propylamine + CO2. It participates in amine and polyamine biosynthesis; S-adenosylmethioninamine biosynthesis; S-adenosylmethioninamine from S-adenosyl-L-methionine: step 1/1. In terms of biological role, catalyzes the decarboxylation of S-adenosylmethionine to S-adenosylmethioninamine (dcAdoMet), the propylamine donor required for the synthesis of the polyamines spermine and spermidine from the diamine putrescine. The protein is S-adenosylmethionine decarboxylase proenzyme of Methanococcus maripaludis (strain DSM 14266 / JCM 13030 / NBRC 101832 / S2 / LL).